We begin with the raw amino-acid sequence, 520 residues long: Protein EARLY FLOWERING 5 (520 aa).

3 consecutive short sequence motifs (nuclear localization signal) follow at residues 16-23 (YRKQIRKR), 52-59 (IRKLDMSK), and 71-78 (KKRQLEDT). The tract at residues 83–410 (VKKRKEYDEK…PPSSFQDGQA (328 aa)) is disordered. Composition is skewed to basic and acidic residues over residues 87-97 (KEYDEKKKEQG) and 114-126 (LTGE…EDSV). Residues 148–168 (SSIGLAISSDGASSSSAALSS) show a composition bias toward low complexity. Composition is skewed to pro residues over residues 198–207 (PLPPLPPLPP), 216–227 (SPFPPPPPGPPP), and 235–253 (PPLP…PPPG). Composition is skewed to polar residues over residues 267–281 (SDFT…NITS), 300–312 (AESN…NANL), and 326–343 (QQHQ…TNFQ). Pro residues-rich tracts occupy residues 346–369 (VHPP…PPHP) and 378–403 (PRPP…PPPS).

In terms of tissue distribution, in seedlings, mostly expressed in the shoot apical meristem (SAM) and root tip.

Its subcellular location is the nucleus. Involved in the regulation of flowering time in both long and short days. This chain is Protein EARLY FLOWERING 5, found in Arabidopsis thaliana (Mouse-ear cress).